The sequence spans 394 residues: RNA-binding motif protein, X-linked-like-2 (394 aa).

Residues 8-86 enclose the RRM domain; it reads GKLFIGGLNL…KAIKVAQATK (79 aa). Basic and acidic residues predominate over residues 67–78; it reads RDMNGKSLDGKA. The segment at 67–394 is disordered; sequence RDMNGKSLDG…MERGGGRSRY (328 aa). The segment covering 150–165 has biased composition (pro residues); sequence RGPPPPPRRAGPPPKR. Composition is skewed to basic and acidic residues over residues 196 to 231 and 239 to 285; these read PRREPPPPRRDPYLGPRDEGYSSRDGYSSRDYREPR and EYTH…REPF. Residues 321–333 show a composition bias toward low complexity; that stretch reads YSGGRDSYSSSYG. Composition is skewed to basic and acidic residues over residues 334 to 350 and 383 to 394; these read RSDRYSRGRDRVGRPDR and GRMERGGGRSRY.

It localises to the nucleus. The protein is RNA-binding motif protein, X-linked-like-2 (RBMXL2) of Macaca fascicularis (Crab-eating macaque).